The primary structure comprises 137 residues: Nucleoside diphosphate kinase (137 aa).

ATP-binding residues include lysine 9, phenylalanine 57, arginine 85, threonine 91, arginine 102, and asparagine 112. Residue histidine 115 is the Pros-phosphohistidine intermediate of the active site.

This sequence belongs to the NDK family. As to quaternary structure, homotetramer. Mg(2+) serves as cofactor.

It is found in the cytoplasm. It catalyses the reaction a 2'-deoxyribonucleoside 5'-diphosphate + ATP = a 2'-deoxyribonucleoside 5'-triphosphate + ADP. It carries out the reaction a ribonucleoside 5'-diphosphate + ATP = a ribonucleoside 5'-triphosphate + ADP. Major role in the synthesis of nucleoside triphosphates other than ATP. The ATP gamma phosphate is transferred to the NDP beta phosphate via a ping-pong mechanism, using a phosphorylated active-site intermediate. The polypeptide is Nucleoside diphosphate kinase (Wolinella succinogenes (strain ATCC 29543 / DSM 1740 / CCUG 13145 / JCM 31913 / LMG 7466 / NCTC 11488 / FDC 602W) (Vibrio succinogenes)).